A 416-amino-acid chain; its full sequence is MSLVAIGINHKTATVDLREKVAFAPDRIHDAMKSLATHTQSGEAVIISTCNRTELYCNNGEEADVVQWLEDYHQLSHADVEPCLYQFKDQEAVKHLMRVSAGLDSLILGEPQILGQVKQSFVKAKEAGTVATTMDRLFQNTFSVAKKIRTETEIGAAAVSVAFAAVSMAKHIFSSLSTTQVLLVGAGETIELVARHLKDNGVKTMVVANRTISRAEAMCDEFGATAITLEQIPDFLPKADIVISSTASPLPILGKGMVEKALKQRRHQPMLLVDIAVPRDIEAEVADLDDAFLYTVDDLQSIIEQNMASRREAAEQAELIADDQSYQFMEWIRSLESVDSIREYRTQSMAIKDELVERAVNKLAQGGNSEQVLLELANKLTNKLIHAPTQALTAASRQGDLNSLGQLRTMLGLDKD.

Substrate-binding positions include 49 to 52, S105, 110 to 112, and Q116; these read TCNR and EPQ. C50 (nucleophile) is an active-site residue. Residue 185-190 participates in NADP(+) binding; it reads GAGETI.

It belongs to the glutamyl-tRNA reductase family. Homodimer.

It catalyses the reaction (S)-4-amino-5-oxopentanoate + tRNA(Glu) + NADP(+) = L-glutamyl-tRNA(Glu) + NADPH + H(+). It participates in porphyrin-containing compound metabolism; protoporphyrin-IX biosynthesis; 5-aminolevulinate from L-glutamyl-tRNA(Glu): step 1/2. Its function is as follows. Catalyzes the NADPH-dependent reduction of glutamyl-tRNA(Glu) to glutamate 1-semialdehyde (GSA). This Shewanella piezotolerans (strain WP3 / JCM 13877) protein is Glutamyl-tRNA reductase.